Reading from the N-terminus, the 881-residue chain is Mechanosensitive ion channel protein 4 (881 aa).

Residues 35–245 are disordered; it reads FWHNDKSSKP…EEEDPFSEED (211 aa). Positions 56–66 are enriched in basic and acidic residues; it reads FMRRSSEKSEE. Polar residues-rich tracts occupy residues 73–82, 100–118, and 206–230; these read LINQFLNKQK, QKNT…SASP, and TPRS…NQGG. Residues 234-245 are compositionally biased toward acidic residues; it reads LEEEEDPFSEED. The next 4 membrane-spanning stretches (helical) occupy residues 255–275, 297–317, 339–359, and 377–397; these read ICVW…SLIC, VMVL…KLFV, KPVQ…FLFD, and VLIC…LVKV. The disordered stretch occupies residues 457–501; it reads GPKAVSSPPQVTVGSGRLQKSPSRVGKSPVLSRSGSKKEGGEEGI. A compositionally biased stretch (polar residues) spans 463 to 478; that stretch reads SPPQVTVGSGRLQKSP. Residues 492–501 are compositionally biased toward basic and acidic residues; it reads SKKEGGEEGI. 2 helical membrane passes run 643-663 and 678-698; these read IVDV…LGIA and VVFV…FVFV.

It belongs to the MscS (TC 1.A.23) family.

The protein resides in the membrane. Mechanosensitive channel that opens in response to stretch forces in the membrane lipid bilayer. The sequence is that of Mechanosensitive ion channel protein 4 (MSL4) from Arabidopsis thaliana (Mouse-ear cress).